A 301-amino-acid polypeptide reads, in one-letter code: Methionyl-tRNA formyltransferase (301 aa).

109–112 serves as a coordination point for (6S)-5,6,7,8-tetrahydrofolate; the sequence is SLLP.

This sequence belongs to the Fmt family.

It catalyses the reaction L-methionyl-tRNA(fMet) + (6R)-10-formyltetrahydrofolate = N-formyl-L-methionyl-tRNA(fMet) + (6S)-5,6,7,8-tetrahydrofolate + H(+). In terms of biological role, attaches a formyl group to the free amino group of methionyl-tRNA(fMet). The formyl group appears to play a dual role in the initiator identity of N-formylmethionyl-tRNA by promoting its recognition by IF2 and preventing the misappropriation of this tRNA by the elongation apparatus. This Ruegeria pomeroyi (strain ATCC 700808 / DSM 15171 / DSS-3) (Silicibacter pomeroyi) protein is Methionyl-tRNA formyltransferase.